We begin with the raw amino-acid sequence, 349 residues long: Uroporphyrinogen decarboxylase (349 aa).

Residues 23–27 (RQAGR), aspartate 71, tyrosine 148, serine 203, and histidine 317 contribute to the substrate site.

The protein belongs to the uroporphyrinogen decarboxylase family. As to quaternary structure, homodimer.

The protein localises to the cytoplasm. It catalyses the reaction uroporphyrinogen III + 4 H(+) = coproporphyrinogen III + 4 CO2. It participates in porphyrin-containing compound metabolism; protoporphyrin-IX biosynthesis; coproporphyrinogen-III from 5-aminolevulinate: step 4/4. Functionally, catalyzes the decarboxylation of four acetate groups of uroporphyrinogen-III to yield coproporphyrinogen-III. The sequence is that of Uroporphyrinogen decarboxylase from Sorangium cellulosum (strain So ce56) (Polyangium cellulosum (strain So ce56)).